Consider the following 271-residue polypeptide: Zinc finger protein 501 (271 aa).

C2H2-type zinc fingers lie at residues 22 to 44 (SKCS…QRIH), 50 to 72 (YVCS…LRIH), 78 to 100 (YKCN…LRIH), 106 to 128 (YKCN…QRIH), 134 to 156 (YKCA…QRSH), 162 to 184 (FKCN…QRIH), 190 to 212 (YTCT…ERTH), 218 to 240 (YKCS…YRIH), and 246 to 268 (YECF…QRLH).

The protein belongs to the krueppel C2H2-type zinc-finger protein family.

It localises to the nucleus. Its subcellular location is the nucleolus. Its function is as follows. May be involved in transcriptional regulation. Essential for Golgi structural integrity. In Pongo abelii (Sumatran orangutan), this protein is Zinc finger protein 501 (ZNF501).